A 270-amino-acid polypeptide reads, in one-letter code: Orotidine 5'-phosphate decarboxylase (270 aa).

Catalysis depends on lysine 89, which acts as the Proton donor.

The protein belongs to the OMP decarboxylase family. Type 2 subfamily.

It catalyses the reaction orotidine 5'-phosphate + H(+) = UMP + CO2. It functions in the pathway pyrimidine metabolism; UMP biosynthesis via de novo pathway; UMP from orotate: step 2/2. In Dehalococcoides mccartyi (strain ATCC BAA-2100 / JCM 16839 / KCTC 5957 / BAV1), this protein is Orotidine 5'-phosphate decarboxylase.